A 263-amino-acid polypeptide reads, in one-letter code: MKPTTISLLQKCKQEKKRFATITAYDFSFAKLFAEEGINVMLVGDSLGMTVQGHDSTLPVTVDDIAYHTRAVRRGAPHCLLLSDLPFMAYATPEQAFENAAAVMRAGANMVKIEGGAWLVDTVKMLTERAVPVCGHLGLTPQSVNVFGGYKVQGRGDAGQILLDDALALEAAGIQLLVLECVPVELAKRVTDALTIPVIGIGAGNVTDGQILVMHDAFGITGGHIPKFAKNFLSEAGDMRAAVRQYIADVESGVYPGEEHSFH.

Residues D45 and D84 each coordinate Mg(2+). 3-methyl-2-oxobutanoate-binding positions include 45–46 (DS), D84, and K112. Position 114 (E114) interacts with Mg(2+). Catalysis depends on E180, which acts as the Proton acceptor.

Belongs to the PanB family. As to quaternary structure, homodecamer; pentamer of dimers. Mg(2+) is required as a cofactor.

The protein localises to the cytoplasm. It carries out the reaction 3-methyl-2-oxobutanoate + (6R)-5,10-methylene-5,6,7,8-tetrahydrofolate + H2O = 2-dehydropantoate + (6S)-5,6,7,8-tetrahydrofolate. The protein operates within cofactor biosynthesis; (R)-pantothenate biosynthesis; (R)-pantoate from 3-methyl-2-oxobutanoate: step 1/2. Functionally, catalyzes the reversible reaction in which hydroxymethyl group from 5,10-methylenetetrahydrofolate is transferred onto alpha-ketoisovalerate to form ketopantoate. This chain is 3-methyl-2-oxobutanoate hydroxymethyltransferase, found in Enterobacter sp. (strain 638).